The chain runs to 204 residues: N-(5'-phosphoribosyl)anthranilate isomerase (204 aa).

This sequence belongs to the TrpF family.

The catalysed reaction is N-(5-phospho-beta-D-ribosyl)anthranilate = 1-(2-carboxyphenylamino)-1-deoxy-D-ribulose 5-phosphate. It participates in amino-acid biosynthesis; L-tryptophan biosynthesis; L-tryptophan from chorismate: step 3/5. This chain is N-(5'-phosphoribosyl)anthranilate isomerase, found in Desulforudis audaxviator (strain MP104C).